The sequence spans 351 residues: SH3 domain-containing protein 3 (351 aa).

Coiled coils occupy residues 1–21 (MDAF…QQLA) and 193–213 (LQLA…LGKE). The BAR domain occupies 31–267 (YESSDVMVID…MVTEKQHKES (237 aa)). Residues 281–340 (TSYFLAEVIHPFSAASEKELDLDKGDYIVVRKVSQTGWAEGECKGKAGWFPMAYIEKRQR) form the SH3 domain.

As to quaternary structure, interacts with FREE1. Interacts (via SH3 domain) with DRP2A/ADL6. Binds to SH3P2. Detected in all tissues except seedlings.

The protein resides in the cytoplasmic vesicle. The protein localises to the clathrin-coated vesicle. In terms of biological role, may be involved in the recruitment of DRP2A to the accessory protein complex and in the negative regulation of its GTPase activity. The chain is SH3 domain-containing protein 3 from Arabidopsis thaliana (Mouse-ear cress).